The primary structure comprises 792 residues: Endonuclease MutS2 (792 aa).

An ATP-binding site is contributed by 334–341; that stretch reads GPNTGGKT. The region spanning 717 to 792 is the Smr domain; the sequence is IDLRGMMLSE…ENGVTVVELK (76 aa).

The protein belongs to the DNA mismatch repair MutS family. MutS2 subfamily. Homodimer. Binds to stalled ribosomes, contacting rRNA.

In terms of biological role, endonuclease that is involved in the suppression of homologous recombination and thus may have a key role in the control of bacterial genetic diversity. Acts as a ribosome collision sensor, splitting the ribosome into its 2 subunits. Detects stalled/collided 70S ribosomes which it binds and splits by an ATP-hydrolysis driven conformational change. Acts upstream of the ribosome quality control system (RQC), a ribosome-associated complex that mediates the extraction of incompletely synthesized nascent chains from stalled ribosomes and their subsequent degradation. Probably generates substrates for RQC. The chain is Endonuclease MutS2 from Ruminiclostridium cellulolyticum (strain ATCC 35319 / DSM 5812 / JCM 6584 / H10) (Clostridium cellulolyticum).